The following is a 346-amino-acid chain: Integrin beta-1-binding protein 2 (346 aa).

Residues Cys5, Cys10, Cys24, and His27 each contribute to the Zn(2+) site. One can recognise a CHORD 1 domain in the interval Cys5 to His64. The SH3-binding motif lies at Pro28–Pro31. Positions 42, 43, 59, and 64 each coordinate Zn(2+). The short motif at Pro70–Pro78 is the SH3-binding element. A disordered region spans residues Pro70 to Leu113. A compositionally biased stretch (polar residues) spans Ala79–Pro94. Basic and acidic residues predominate over residues Glu98–Leu109. 2 residues coordinate Zn(2+): Cys150 and Cys155. The 60-residue stretch at Cys150 to His209 folds into the CHORD 2 domain. An SH2-binding motif is present at residues Tyr159 to Ser162. Cys169 and His172 together coordinate Zn(2+). Positions Pro173–Pro176 match the SH3-binding motif. Zn(2+)-binding residues include Cys187, Cys188, Cys204, and His209. Residues Leu216–Glu305 form the CS domain. Positions Tyr235–Ile238 match the SH2-binding motif. Residues Ala311–Glu346 are disordered. The span at Glu321–Glu346 shows a compositional bias: acidic residues.

In terms of assembly, interacts with beta-1 integrin subunit. This interaction is regulated by divalent cations, and it occurs only in absence of calcium.

Functionally, may play a role during maturation and/or organization of muscles cells. This is Integrin beta-1-binding protein 2 (ITGB1BP2) from Sus scrofa (Pig).